A 201-amino-acid polypeptide reads, in one-letter code: Pyrrolidone-carboxylate peptidase (201 aa).

Residues Glu-81, Cys-143, and His-168 contribute to the active site.

It belongs to the peptidase C15 family. As to quaternary structure, homotetramer.

It is found in the cytoplasm. It catalyses the reaction Release of an N-terminal pyroglutamyl group from a polypeptide, the second amino acid generally not being Pro.. Removes 5-oxoproline from various penultimate amino acid residues except L-proline. This chain is Pyrrolidone-carboxylate peptidase (pcp), found in Halalkalibacterium halodurans (strain ATCC BAA-125 / DSM 18197 / FERM 7344 / JCM 9153 / C-125) (Bacillus halodurans).